A 264-amino-acid chain; its full sequence is Probable glycerophosphodiester phosphodiesterase 2 (264 aa).

One can recognise a GP-PDE domain in the interval 17 to 255 (RIAMAHRGFT…DRADLLRDVL (239 aa)). The Proton acceptor role is filled by H22. Residues E50, D52, and H65 each coordinate a divalent metal cation. The active-site Proton donor is the H65.

Belongs to the glycerophosphoryl diester phosphodiesterase family. The cofactor is a divalent metal cation.

It catalyses the reaction a sn-glycero-3-phosphodiester + H2O = an alcohol + sn-glycerol 3-phosphate + H(+). Its function is as follows. Glycerophosphodiester phosphodiesterase hydrolyzes glycerophosphodiesters into glycerol-3-phosphate (G3P) and the corresponding alcohol. This is Probable glycerophosphodiester phosphodiesterase 2 from Mycobacterium tuberculosis (strain ATCC 25618 / H37Rv).